The following is a 291-amino-acid chain: MEMO1 family protein TK1477 (291 aa).

It belongs to the MEMO1 family.

This Thermococcus kodakarensis (strain ATCC BAA-918 / JCM 12380 / KOD1) (Pyrococcus kodakaraensis (strain KOD1)) protein is MEMO1 family protein TK1477.